Here is a 750-residue protein sequence, read N- to C-terminus: Photosystem I P700 chlorophyll a apoprotein A1 (750 aa).

Helical transmembrane passes span 72–95 (VFSA…FHGA), 158–181 (LYST…FHYH), 197–221 (LNHH…HVSL), 293–311 (TAHH…GHMY), 348–371 (WHAQ…HHMY), 387–413 (LSIF…IFMV), 435–457 (AIIS…LYIH), and 532–550 (FLVH…LILL). Positions 574 and 583 each coordinate [4Fe-4S] cluster. 2 helical membrane passes run 590-611 (HVFL…HFSW) and 664-686 (LSAY…MFLF). H675 is a chlorophyll a' binding site. Chlorophyll a-binding residues include M683 and Y691. Residue W692 participates in phylloquinone binding. A helical transmembrane segment spans residues 724–744 (AVGVAHYLLGGIATTWAFFLA).

The protein belongs to the PsaA/PsaB family. As to quaternary structure, the PsaA/B heterodimer binds the P700 chlorophyll special pair and subsequent electron acceptors. PSI consists of a core antenna complex that captures photons, and an electron transfer chain that converts photonic excitation into a charge separation. The eukaryotic PSI reaction center is composed of at least 11 subunits. Requires P700 is a chlorophyll a/chlorophyll a' dimer, A0 is one or more chlorophyll a, A1 is one or both phylloquinones and FX is a shared 4Fe-4S iron-sulfur center. as cofactor.

The protein localises to the plastid. The protein resides in the chloroplast thylakoid membrane. It carries out the reaction reduced [plastocyanin] + hnu + oxidized [2Fe-2S]-[ferredoxin] = oxidized [plastocyanin] + reduced [2Fe-2S]-[ferredoxin]. Functionally, psaA and PsaB bind P700, the primary electron donor of photosystem I (PSI), as well as the electron acceptors A0, A1 and FX. PSI is a plastocyanin-ferredoxin oxidoreductase, converting photonic excitation into a charge separation, which transfers an electron from the donor P700 chlorophyll pair to the spectroscopically characterized acceptors A0, A1, FX, FA and FB in turn. Oxidized P700 is reduced on the lumenal side of the thylakoid membrane by plastocyanin. The chain is Photosystem I P700 chlorophyll a apoprotein A1 from Chlorokybus atmophyticus (Soil alga).